A 367-amino-acid polypeptide reads, in one-letter code: MATPNNLTPTNCSWWPISALESDAAKPAEAPDAPEAASPAHWPRESLVLYHWTQSFSSQKVRLVIAEKGLVCEERDVSLPQSEHKEPWFMRLNLGEEVPVIIHRDNIISDYDQIIDYVERTFTGEHVVALMPEVGSLQHARVLQYRELLDALPMDAYTHGCILHPELTTDSMIPKYATAEIRRHLANATTDLMKLDHEEEPQLSEPYLSKQKKLMAKILEHDDVSYLKKILGELAMVLDQIEAELEKRKLENEGQKCELWLCGCAFTLADVLLGATLHRLKFLGLSKKYWEDGSRPNLQSFFERVQRRFAFRKVLGDIHTTLLSAVIPNAFRLVKRKPPSFFGASFLMGSLGGMGYFAYWYLKKKYI.

The GST N-terminal domain maps to 45–126; it reads ESLVLYHWTQ…YVERTFTGEH (82 aa). The 168-residue stretch at 174–341 folds into the GST C-terminal domain; the sequence is PKYATAEIRR…RLVKRKPPSF (168 aa).

The protein belongs to the GST superfamily.

This chain is Ganglioside-induced differentiation-associated protein 1-like 1 (GDAP1L1), found in Homo sapiens (Human).